The sequence spans 730 residues: Elongation factor 2 (730 aa).

The tr-type G domain occupies 19–229 (DYIRNIGIVA…NITFKDIIQY (211 aa)). GTP contacts are provided by residues 28-35 (AHIDHGKT), 94-98 (DTPGH), and 148-151 (NKVD). At histidine 597 the chain carries Diphthamide.

It belongs to the TRAFAC class translation factor GTPase superfamily. Classic translation factor GTPase family. EF-G/EF-2 subfamily.

It localises to the cytoplasm. Its function is as follows. Catalyzes the GTP-dependent ribosomal translocation step during translation elongation. During this step, the ribosome changes from the pre-translocational (PRE) to the post-translocational (POST) state as the newly formed A-site-bound peptidyl-tRNA and P-site-bound deacylated tRNA move to the P and E sites, respectively. Catalyzes the coordinated movement of the two tRNA molecules, the mRNA and conformational changes in the ribosome. This Methanosphaera stadtmanae (strain ATCC 43021 / DSM 3091 / JCM 11832 / MCB-3) protein is Elongation factor 2.